The chain runs to 268 residues: 3-deoxy-manno-octulosonate cytidylyltransferase (268 aa).

The protein belongs to the KdsB family.

Its subcellular location is the cytoplasm. It catalyses the reaction 3-deoxy-alpha-D-manno-oct-2-ulosonate + CTP = CMP-3-deoxy-beta-D-manno-octulosonate + diphosphate. Its pathway is nucleotide-sugar biosynthesis; CMP-3-deoxy-D-manno-octulosonate biosynthesis; CMP-3-deoxy-D-manno-octulosonate from 3-deoxy-D-manno-octulosonate and CTP: step 1/1. The protein operates within bacterial outer membrane biogenesis; lipopolysaccharide biosynthesis. Functionally, activates KDO (a required 8-carbon sugar) for incorporation into bacterial lipopolysaccharide in Gram-negative bacteria. This chain is 3-deoxy-manno-octulosonate cytidylyltransferase, found in Psychrobacter arcticus (strain DSM 17307 / VKM B-2377 / 273-4).